The chain runs to 66 residues: MKASELRNYTDEELRNLLEEKKRQLMELRFQLAMGQLKNTSLIKLTKRDIARIKTILRERELGIRR.

It belongs to the universal ribosomal protein uL29 family.

The chain is Large ribosomal subunit protein uL29 from Thermotoga neapolitana (strain ATCC 49049 / DSM 4359 / NBRC 107923 / NS-E).